Here is a 479-residue protein sequence, read N- to C-terminus: tRNA-2-methylthio-N(6)-dimethylallyladenosine synthase (479 aa).

An MTTase N-terminal domain is found at 6–122 (KTVYIKTVGC…IPDMLTKVTS (117 aa)). [4Fe-4S] cluster is bound by residues Cys15, Cys51, Cys85, Cys172, Cys176, and Cys179. The Radical SAM core domain occupies 158–390 (RPTPFQAYLR…LAVQDRISKE (233 aa)). Residues 393–464 (QKLIGDTVEV…SHTLIGRVKT (72 aa)) form the TRAM domain.

The protein belongs to the methylthiotransferase family. MiaB subfamily. In terms of assembly, monomer. The cofactor is [4Fe-4S] cluster.

Its subcellular location is the cytoplasm. It carries out the reaction N(6)-dimethylallyladenosine(37) in tRNA + (sulfur carrier)-SH + AH2 + 2 S-adenosyl-L-methionine = 2-methylsulfanyl-N(6)-dimethylallyladenosine(37) in tRNA + (sulfur carrier)-H + 5'-deoxyadenosine + L-methionine + A + S-adenosyl-L-homocysteine + 2 H(+). In terms of biological role, catalyzes the methylthiolation of N6-(dimethylallyl)adenosine (i(6)A), leading to the formation of 2-methylthio-N6-(dimethylallyl)adenosine (ms(2)i(6)A) at position 37 in tRNAs that read codons beginning with uridine. The protein is tRNA-2-methylthio-N(6)-dimethylallyladenosine synthase of Rhodopirellula baltica (strain DSM 10527 / NCIMB 13988 / SH1).